The sequence spans 312 residues: Methionyl-tRNA formyltransferase (312 aa).

109-112 lines the (6S)-5,6,7,8-tetrahydrofolate pocket; that stretch reads SLLP.

This sequence belongs to the Fmt family.

The catalysed reaction is L-methionyl-tRNA(fMet) + (6R)-10-formyltetrahydrofolate = N-formyl-L-methionyl-tRNA(fMet) + (6S)-5,6,7,8-tetrahydrofolate + H(+). Functionally, attaches a formyl group to the free amino group of methionyl-tRNA(fMet). The formyl group appears to play a dual role in the initiator identity of N-formylmethionyl-tRNA by promoting its recognition by IF2 and preventing the misappropriation of this tRNA by the elongation apparatus. In Listeria welshimeri serovar 6b (strain ATCC 35897 / DSM 20650 / CCUG 15529 / CIP 8149 / NCTC 11857 / SLCC 5334 / V8), this protein is Methionyl-tRNA formyltransferase.